A 257-amino-acid polypeptide reads, in one-letter code: UPF0246 protein YaaA (257 aa).

Belongs to the UPF0246 family.

In Salmonella arizonae (strain ATCC BAA-731 / CDC346-86 / RSK2980), this protein is UPF0246 protein YaaA.